The sequence spans 445 residues: 3-phosphoshikimate 1-carboxyvinyltransferase (445 aa).

3-phosphoshikimate-binding residues include K34, S35, and R39. Residue K34 participates in phosphoenolpyruvate binding. Phosphoenolpyruvate is bound by residues G112 and R140. Positions 186, 187, 188, 216, 331, and 358 each coordinate 3-phosphoshikimate. Q188 is a binding site for phosphoenolpyruvate. The active-site Proton acceptor is E331. Residues R362, R403, and K428 each contribute to the phosphoenolpyruvate site.

The protein belongs to the EPSP synthase family. In terms of assembly, monomer.

It localises to the cytoplasm. It carries out the reaction 3-phosphoshikimate + phosphoenolpyruvate = 5-O-(1-carboxyvinyl)-3-phosphoshikimate + phosphate. It functions in the pathway metabolic intermediate biosynthesis; chorismate biosynthesis; chorismate from D-erythrose 4-phosphate and phosphoenolpyruvate: step 6/7. Catalyzes the transfer of the enolpyruvyl moiety of phosphoenolpyruvate (PEP) to the 5-hydroxyl of shikimate-3-phosphate (S3P) to produce enolpyruvyl shikimate-3-phosphate and inorganic phosphate. In Kocuria rhizophila (strain ATCC 9341 / DSM 348 / NBRC 103217 / DC2201), this protein is 3-phosphoshikimate 1-carboxyvinyltransferase.